The following is a 555-amino-acid chain: T-complex protein 1 subunit gamma (555 aa).

The segment at 527–555 (KKKQAPGSGPSKPTIETEGDADNEQILPD) is disordered.

This sequence belongs to the TCP-1 chaperonin family. Heterooligomeric complex of about 850 to 900 kDa that forms two stacked rings, 12 to 16 nm in diameter. Interacts with CCT8.

The protein resides in the cytoplasm. Molecular chaperone; assists the folding of proteins upon ATP hydrolysis. Known to play a role, in vitro, in the folding of actin and tubulin. This Arabidopsis thaliana (Mouse-ear cress) protein is T-complex protein 1 subunit gamma.